The sequence spans 144 residues: Putative pre-16S rRNA nuclease (144 aa).

The protein belongs to the YqgF nuclease family.

The protein localises to the cytoplasm. In terms of biological role, could be a nuclease involved in processing of the 5'-end of pre-16S rRNA. The chain is Putative pre-16S rRNA nuclease from Wigglesworthia glossinidia brevipalpis.